The sequence spans 645 residues: ATP-dependent DNA helicase Rep (645 aa).

A UvrD-like helicase ATP-binding domain is found at 1-280 (MSLNFSQKNA…IKMEHNYRSS (280 aa)). ATP is bound by residues 22–29 (AGAGSGKT) and arginine 278. In terms of domain architecture, UvrD-like helicase C-terminal spans 281 to 562 (GRILKAANSL…QLMTLHASKG (282 aa)).

Belongs to the helicase family. UvrD subfamily. In terms of assembly, homodimer.

The catalysed reaction is Couples ATP hydrolysis with the unwinding of duplex DNA by translocating in the 3'-5' direction.. It catalyses the reaction ATP + H2O = ADP + phosphate + H(+). Functionally, rep helicase is a single-stranded DNA-dependent ATPase involved in DNA replication; it can initiate unwinding at a nick in the DNA. It binds to the single-stranded DNA and acts in a progressive fashion along the DNA in the 3' to 5' direction. This is ATP-dependent DNA helicase Rep from Buchnera aphidicola subsp. Acyrthosiphon pisum (strain APS) (Acyrthosiphon pisum symbiotic bacterium).